Here is a 185-residue protein sequence, read N- to C-terminus: Elongation factor P (185 aa).

This sequence belongs to the elongation factor P family.

The protein localises to the cytoplasm. Its pathway is protein biosynthesis; polypeptide chain elongation. Its function is as follows. Involved in peptide bond synthesis. Stimulates efficient translation and peptide-bond synthesis on native or reconstituted 70S ribosomes in vitro. Probably functions indirectly by altering the affinity of the ribosome for aminoacyl-tRNA, thus increasing their reactivity as acceptors for peptidyl transferase. The chain is Elongation factor P from Staphylococcus aureus (strain Mu3 / ATCC 700698).